A 676-amino-acid chain; its full sequence is Cysteine-rich receptor-like protein kinase 8 (676 aa).

The first 34 residues, methionine 1–alanine 34, serve as a signal peptide directing secretion. Residues glutamine 35 to valine 291 are Extracellular-facing. Gnk2-homologous domains follow at residues phenylalanine 38–phenylalanine 142 and glutamate 151–phenylalanine 255. 8 N-linked (GlcNAc...) asparagine glycosylation sites follow: asparagine 46, asparagine 53, asparagine 71, asparagine 114, asparagine 159, asparagine 187, asparagine 257, and asparagine 288. The chain crosses the membrane as a helical span at residues leucine 292–phenylalanine 312. Residues leucine 313–arginine 676 lie on the Cytoplasmic side of the membrane. The region spanning phenylalanine 353–phenylalanine 639 is the Protein kinase domain. ATP contacts are provided by residues isoleucine 359–valine 367 and lysine 381. Phosphotyrosine is present on tyrosine 426. The Proton acceptor role is filled by aspartate 478. Position 482 is a phosphoserine (serine 482). Position 518 is a phosphothreonine (threonine 518). Tyrosine 526 carries the phosphotyrosine modification. Residues phenylalanine 640 to aspartate 666 form a disordered region. The segment covering serine 652 to proline 662 has biased composition (low complexity).

This sequence belongs to the protein kinase superfamily. Ser/Thr protein kinase family. CRK subfamily.

The protein localises to the membrane. It carries out the reaction L-seryl-[protein] + ATP = O-phospho-L-seryl-[protein] + ADP + H(+). The catalysed reaction is L-threonyl-[protein] + ATP = O-phospho-L-threonyl-[protein] + ADP + H(+). This is Cysteine-rich receptor-like protein kinase 8 (CRK8) from Arabidopsis thaliana (Mouse-ear cress).